The sequence spans 359 residues: GATA-binding factor 1-A (359 aa).

The segment at 1–21 is disordered; it reads MDYTTLTTQDPDPNYTESGLA. 2 consecutive GATA-type zinc fingers follow at residues 178 to 202 and 232 to 256; these read CVNC…CNAC and CSNC…CNAC. Disordered regions lie at residues 271 to 311 and 323 to 359; these read MKKE…SPYP and PMGH…VTPP. Over residues 279 to 291 the composition is skewed to basic residues; the sequence is RNRKVSSRSKKKK.

As to expression, expressed in the developing ventral blood island, and in both tadpole and adult erythrocytes.

Its subcellular location is the nucleus. Functionally, transcription factor that acts synergistically with tal1/scl and lmo2 to specify embryonic dorsal mesoderm to a hematopoietic fate. The protein is GATA-binding factor 1-A (gata1-a) of Xenopus laevis (African clawed frog).